The sequence spans 360 residues: Photosystem II protein D1 2 (360 aa).

Transmembrane regions (helical) follow at residues Tyr-29–Thr-46, His-118–Tyr-133, and Trp-142–Ser-156. Residue His-118 coordinates chlorophyll a. Tyr-126 lines the pheophytin a pocket. [CaMn4O5] cluster-binding residues include Asp-170 and Glu-189. A helical membrane pass occupies residues Phe-197 to Leu-218. His-198 serves as a coordination point for chlorophyll a. Residues His-215 and Ser-264–Phe-265 contribute to the a quinone site. A Fe cation-binding site is contributed by His-215. His-272 is a binding site for Fe cation. The chain crosses the membrane as a helical span at residues Phe-274–Met-288. The [CaMn4O5] cluster site is built by His-332, Glu-333, Asp-342, and Ala-344. A propeptide spanning residues Ala-345–Gly-360 is cleaved from the precursor.

The protein belongs to the reaction center PufL/M/PsbA/D family. As to quaternary structure, PSII is composed of 1 copy each of membrane proteins PsbA, PsbB, PsbC, PsbD, PsbE, PsbF, PsbH, PsbI, PsbJ, PsbK, PsbL, PsbM, PsbT, PsbX, PsbY, PsbZ, Psb30/Ycf12, peripheral proteins PsbO, CyanoQ (PsbQ), PsbU, PsbV and a large number of cofactors. It forms dimeric complexes. It depends on The D1/D2 heterodimer binds P680, chlorophylls that are the primary electron donor of PSII, and subsequent electron acceptors. It shares a non-heme iron and each subunit binds pheophytin, quinone, additional chlorophylls, carotenoids and lipids. D1 provides most of the ligands for the Mn4-Ca-O5 cluster of the oxygen-evolving complex (OEC). There is also a Cl(-1) ion associated with D1 and D2, which is required for oxygen evolution. The PSII complex binds additional chlorophylls, carotenoids and specific lipids. as a cofactor. Tyr-161 forms a radical intermediate that is referred to as redox-active TyrZ, YZ or Y-Z. In terms of processing, C-terminally processed by CtpA; processing is essential to allow assembly of the oxygen-evolving complex and thus photosynthetic growth.

It localises to the cellular thylakoid membrane. The catalysed reaction is 2 a plastoquinone + 4 hnu + 2 H2O = 2 a plastoquinol + O2. Functionally, photosystem II (PSII) is a light-driven water:plastoquinone oxidoreductase that uses light energy to abstract electrons from H(2)O, generating O(2) and a proton gradient subsequently used for ATP formation. It consists of a core antenna complex that captures photons, and an electron transfer chain that converts photonic excitation into a charge separation. The D1/D2 (PsbA/PsbD) reaction center heterodimer binds P680, the primary electron donor of PSII as well as several subsequent electron acceptors. The polypeptide is Photosystem II protein D1 2 (Acaryochloris marina (strain MBIC 11017)).